Reading from the N-terminus, the 362-residue chain is Inactive 2'-5' oligoadenylate synthetase 1C (362 aa).

It belongs to the 2-5A synthase family. In terms of tissue distribution, expressed at highest level in brain with lesser amounts in spleen, kidney, stomach, liver, intestine, ovary, skin and testis. Not detected in lung, thymus, heart and uterus.

Its function is as follows. Does not have 2'-5'-OAS activity, but can bind double-stranded RNA. This is Inactive 2'-5' oligoadenylate synthetase 1C from Mus musculus (Mouse).